A 319-amino-acid chain; its full sequence is Acetyl-coenzyme A carboxylase carboxyl transferase subunit alpha (319 aa).

In terms of domain architecture, CoA carboxyltransferase C-terminal spans Arg39–Glu293.

It belongs to the AccA family. Acetyl-CoA carboxylase is a heterohexamer composed of biotin carboxyl carrier protein (AccB), biotin carboxylase (AccC) and two subunits each of ACCase subunit alpha (AccA) and ACCase subunit beta (AccD).

It is found in the cytoplasm. It carries out the reaction N(6)-carboxybiotinyl-L-lysyl-[protein] + acetyl-CoA = N(6)-biotinyl-L-lysyl-[protein] + malonyl-CoA. It participates in lipid metabolism; malonyl-CoA biosynthesis; malonyl-CoA from acetyl-CoA: step 1/1. In terms of biological role, component of the acetyl coenzyme A carboxylase (ACC) complex. First, biotin carboxylase catalyzes the carboxylation of biotin on its carrier protein (BCCP) and then the CO(2) group is transferred by the carboxyltransferase to acetyl-CoA to form malonyl-CoA. In Neisseria gonorrhoeae (strain ATCC 700825 / FA 1090), this protein is Acetyl-coenzyme A carboxylase carboxyl transferase subunit alpha.